The primary structure comprises 398 residues: Elongation factor Tu (398 aa).

In terms of domain architecture, tr-type G spans 10-207 (KPHVNIGTIG…TVDEYIPEPE (198 aa)). Residues 19-26 (GHVDHGKT) are G1. GTP is bound at residue 19-26 (GHVDHGKT). Threonine 26 is a Mg(2+) binding site. Positions 63-67 (GITIN) are G2. The G3 stretch occupies residues 84-87 (DAPG). GTP-binding positions include 84–88 (DAPGH) and 139–142 (NKVD). Positions 139 to 142 (NKVD) are G4. Residues 177 to 179 (SAL) are G5.

The protein belongs to the TRAFAC class translation factor GTPase superfamily. Classic translation factor GTPase family. EF-Tu/EF-1A subfamily. As to quaternary structure, monomer.

The protein localises to the cytoplasm. It carries out the reaction GTP + H2O = GDP + phosphate + H(+). GTP hydrolase that promotes the GTP-dependent binding of aminoacyl-tRNA to the A-site of ribosomes during protein biosynthesis. The sequence is that of Elongation factor Tu from Streptococcus agalactiae serotype Ia (strain ATCC 27591 / A909 / CDC SS700).